A 533-amino-acid chain; its full sequence is Glucose-6-phosphate isomerase (533 aa).

Glutamate 341 (proton donor) is an active-site residue. Catalysis depends on residues histidine 372 and lysine 501.

The protein belongs to the GPI family.

It localises to the cytoplasm. It carries out the reaction alpha-D-glucose 6-phosphate = beta-D-fructose 6-phosphate. Its pathway is carbohydrate biosynthesis; gluconeogenesis. The protein operates within carbohydrate degradation; glycolysis; D-glyceraldehyde 3-phosphate and glycerone phosphate from D-glucose: step 2/4. Its function is as follows. Catalyzes the reversible isomerization of glucose-6-phosphate to fructose-6-phosphate. This is Glucose-6-phosphate isomerase from Cereibacter sphaeroides (strain ATCC 17023 / DSM 158 / JCM 6121 / CCUG 31486 / LMG 2827 / NBRC 12203 / NCIMB 8253 / ATH 2.4.1.) (Rhodobacter sphaeroides).